The sequence spans 404 residues: Exodeoxyribonuclease 7 large subunit (404 aa).

Belongs to the XseA family. Heterooligomer composed of large and small subunits.

Its subcellular location is the cytoplasm. It carries out the reaction Exonucleolytic cleavage in either 5'- to 3'- or 3'- to 5'-direction to yield nucleoside 5'-phosphates.. In terms of biological role, bidirectionally degrades single-stranded DNA into large acid-insoluble oligonucleotides, which are then degraded further into small acid-soluble oligonucleotides. This is Exodeoxyribonuclease 7 large subunit from Caldanaerobacter subterraneus subsp. tengcongensis (strain DSM 15242 / JCM 11007 / NBRC 100824 / MB4) (Thermoanaerobacter tengcongensis).